A 71-amino-acid polypeptide reads, in one-letter code: Protein PSY3 (71 aa).

Positions 1 to 25 (MGYSSSSRIGLCLFLFFTFALLSSA) are cleaved as a signal peptide. A propeptide spanning residues 26-49 (RISLSFSENEMTVVPERSLMVSTN) is cleaved from the precursor. A disordered region spans residues 47–71 (STNDYSDPTANGRHDPPRGGRGRRR). Position 51 is a sulfotyrosine (Tyr-51). Pro-63 carries the post-translational modification 4-hydroxyproline. Pro-63 carries an O-linked (Ara...) hydroxyproline glycan. The propeptide occupies 66 to 71 (GRGRRR).

Belongs to the sulfated-peptide plant hormone family. Post-translationally, the sulfation and the glycosylation are required for full activity.

It localises to the secreted. Promotes cellular proliferation and expansion. This chain is Protein PSY3 (PSY3), found in Arabidopsis thaliana (Mouse-ear cress).